The chain runs to 262 residues: Histone chaperone cia1 (262 aa).

Residues 157–262 (IQWDNPDFDD…KPEEKPETSQ (106 aa)) are disordered. 2 coiled-coil regions span residues 173–196 (DADEEEEEEEADEMEEEFDEEGEG) and 223–253 (KGSEEEEEEEIDIEEEEEESALANASAAEEK). Composition is skewed to acidic residues over residues 173–219 (DADE…GEGE) and 226–242 (EEEEEEEIDIEEEEEES). Basic and acidic residues predominate over residues 250 to 262 (AEEKPEEKPETSQ).

It belongs to the ASF1 family. In terms of assembly, interacts with histone H3 and histone H4.

Its subcellular location is the nucleus. In terms of biological role, histone chaperone that facilitates histone deposition and histone exchange and removal during nucleosome assembly and disassembly. The sequence is that of Histone chaperone cia1 (cia1) from Schizosaccharomyces pombe (strain 972 / ATCC 24843) (Fission yeast).